The primary structure comprises 328 residues: UPF0104 membrane protein AF_2231 (328 aa).

The next 6 membrane-spanning stretches (helical) occupy residues 31-51 (NWLLLIVAFLLQVSFWLLWAL), 116-136 (ILDSMYFSTALPVFLIVTGFS), 139-159 (FGFKIAIIFITLLLVFLYILY), 221-241 (LVTLVMWSASFAIPSVILVAL), 245-265 (AYFLYSYTAQLIIVIVSLVPL), and 277-297 (MAYLYSNFVPTNVLGVLVGLW).

This sequence belongs to the UPF0104 family.

The protein localises to the cell membrane. The sequence is that of UPF0104 membrane protein AF_2231 from Archaeoglobus fulgidus (strain ATCC 49558 / DSM 4304 / JCM 9628 / NBRC 100126 / VC-16).